The sequence spans 264 residues: 1H-3-hydroxy-4-oxoquinoline 2,4-dioxygenase (264 aa).

Substrate is bound by residues 30-32 (WCQ), 94-95 (TS), and W153. H244 serves as the catalytic Proton donor/acceptor.

It belongs to the AB hydrolase superfamily. Requires None. Contrary to most other dioxygenases, this enzyme does not require a cofactor for catalysis. as cofactor.

It catalyses the reaction 3-hydroxy-1H-quinolin-4-one + O2 = N-formylanthranilate + CO + H(+). Its function is as follows. Ring-cleaving dioxygenase involved in oxoquinoline degradation and utilization. The sequence is that of 1H-3-hydroxy-4-oxoquinoline 2,4-dioxygenase (qdo) from Pseudomonas putida (Arthrobacter siderocapsulatus).